A 442-amino-acid chain; its full sequence is Probable alpha-galactosidase B (442 aa).

An N-terminal signal peptide occupies residues 1–19 (MQRYISLSVSLSLLSGANA). 2 cysteine pairs are disulfide-bonded: Cys42–Cys74 and Cys124–Cys154. The active-site Nucleophile is the Asp152. N-linked (GlcNAc...) asparagine glycans are attached at residues Asn159, Asn173, Asn179, and Asn215. 224 to 228 (EWGQA) provides a ligand contact to substrate. Asn235 carries N-linked (GlcNAc...) asparagine glycosylation. Asp246 functions as the Proton donor in the catalytic mechanism. N-linked (GlcNAc...) asparagine glycosylation is present at Asn285.

Belongs to the glycosyl hydrolase 27 family.

The protein localises to the secreted. It catalyses the reaction Hydrolysis of terminal, non-reducing alpha-D-galactose residues in alpha-D-galactosides, including galactose oligosaccharides, galactomannans and galactolipids.. In terms of biological role, hydrolyzes a variety of simple alpha-D-galactoside as well as more complex molecules such as oligosaccharides and polysaccharides. In Aspergillus oryzae (strain ATCC 42149 / RIB 40) (Yellow koji mold), this protein is Probable alpha-galactosidase B (aglB).